The sequence spans 218 residues: Recombination protein RecR (218 aa).

A C4-type zinc finger spans residues 56 to 71 (CRICCNISREEVCRIC). A Toprim domain is found at 79–195 (GTICVVEEPK…VVSRLASGMP (117 aa)).

Belongs to the RecR family.

Functionally, may play a role in DNA repair. It seems to be involved in an RecBC-independent recombinational process of DNA repair. It may act with RecF and RecO. In Corynebacterium glutamicum (strain R), this protein is Recombination protein RecR.